Consider the following 195-residue polypeptide: Thymidine kinase (195 aa).

Residues 9–16 and 87–90 contribute to the ATP site; these read STMNAGKS and DEAQ. Residue Glu-88 is the Proton acceptor of the active site. Residues Cys-145, Cys-147, Cys-182, and His-185 each coordinate Zn(2+).

Belongs to the thymidine kinase family. As to quaternary structure, homotetramer.

The protein resides in the cytoplasm. It carries out the reaction thymidine + ATP = dTMP + ADP + H(+). The sequence is that of Thymidine kinase from Jannaschia sp. (strain CCS1).